Reading from the N-terminus, the 438-residue chain is LIM domain-containing protein C4F6.12 (438 aa).

Disordered regions lie at residues 1 to 37 (MHSP…NNLV) and 49 to 78 (TGGR…TIKQ). Over residues 24-37 (SPVSTNGSPLNNLV) the composition is skewed to polar residues. S67 and S96 each carry phosphoserine. 3 consecutive LIM zinc-binding domains span residues 256-316 (KSCH…QFSP), 318-375 (CKHC…NKYA), and 376-435 (VKCK…SVKF).

The polypeptide is LIM domain-containing protein C4F6.12 (Schizosaccharomyces pombe (strain 972 / ATCC 24843) (Fission yeast)).